The following is a 256-amino-acid chain: DNA repair protein RecO (256 aa).

Belongs to the RecO family.

Involved in DNA repair and RecF pathway recombination. The protein is DNA repair protein RecO of Bartonella henselae (strain ATCC 49882 / DSM 28221 / CCUG 30454 / Houston 1) (Rochalimaea henselae).